The chain runs to 78 residues: Small ribosomal subunit protein bS18 (78 aa).

The protein belongs to the bacterial ribosomal protein bS18 family. As to quaternary structure, part of the 30S ribosomal subunit. Forms a tight heterodimer with protein bS6.

Its function is as follows. Binds as a heterodimer with protein bS6 to the central domain of the 16S rRNA, where it helps stabilize the platform of the 30S subunit. The chain is Small ribosomal subunit protein bS18 from Acidothermus cellulolyticus (strain ATCC 43068 / DSM 8971 / 11B).